Consider the following 249-residue polypeptide: Mediator of RNA polymerase II transcription subunit 8 (249 aa).

The stretch at 1 to 26 (MQREEKQLDMLLEAVLNRLNDLKHSI) forms a coiled coil. 2 stretches are compositionally biased toward polar residues: residues 215–224 (SPMSAVSPSG) and 235–249 (IKTNIKSANQVHPYR). Residues 215–249 (SPMSAVSPSGNAPMGKMPSGIKTNIKSANQVHPYR) form a disordered region.

The protein belongs to the Mediator complex subunit 8 family. Component of the Mediator complex.

The protein localises to the nucleus. Functionally, component of the Mediator complex, a coactivator involved in the regulated transcription of nearly all RNA polymerase II-dependent genes. Mediator functions as a bridge to convey information from gene-specific regulatory proteins to the basal RNA polymerase II transcription machinery. Mediator is recruited to promoters by direct interactions with regulatory proteins and serves as a scaffold for the assembly of a functional preinitiation complex with RNA polymerase II and the general transcription factors. This Anopheles gambiae (African malaria mosquito) protein is Mediator of RNA polymerase II transcription subunit 8 (MED8).